Reading from the N-terminus, the 516-residue chain is Flavin-dependent halogenase armH2 (516 aa).

Residues Gly16, Ala19, and Glu49 each coordinate FAD. The chloride site is built by Ser328 and Gly329. Ile330 provides a ligand contact to FAD. Residues 440 to 475 (PQANGNGAAKQDAVPAPIPVALSSGAGPEKDAKRRE) form a disordered region.

This sequence belongs to the flavin-dependent halogenase family.

The enzyme catalyses melleolide F + FADH2 + chloride + O2 = 6'-chloromelleolide F + FAD + 2 H2O + H(+). Its function is as follows. Flavin-dependent halogenase involved in the biosynthesis of melleolides, a range of antifungal and phytotoxic polyketide derivatives composed of an orsellinic acid (OA) moiety esterified to various sesquiterpene alcohols. The halogenase catalyzes the transfer of a single chlorine atom to the melleolide backbone, resulting in a 6'-chloromelleolide product. The enzyme acts on free substrate and does not depend on carrier-protein-dependent acceptor molecules. This chain is Flavin-dependent halogenase armH2, found in Armillaria mellea (Honey mushroom).